Here is a 505-residue protein sequence, read N- to C-terminus: ATP synthase subunit alpha (505 aa).

170-177 (GDRQTGKT) contributes to the ATP binding site.

This sequence belongs to the ATPase alpha/beta chains family. In terms of assembly, F-type ATPases have 2 components, CF(1) - the catalytic core - and CF(0) - the membrane proton channel. CF(1) has five subunits: alpha(3), beta(3), gamma(1), delta(1), epsilon(1). CF(0) has four main subunits: a(1), b(1), b'(1) and c(9-12).

The protein localises to the cellular thylakoid membrane. It catalyses the reaction ATP + H2O + 4 H(+)(in) = ADP + phosphate + 5 H(+)(out). Functionally, produces ATP from ADP in the presence of a proton gradient across the membrane. The alpha chain is a regulatory subunit. This Prochlorococcus marinus (strain SARG / CCMP1375 / SS120) protein is ATP synthase subunit alpha.